The following is a 954-amino-acid chain: Kinesin-like protein KIN-14Q (954 aa).

One can recognise a Calponin-homology (CH) domain in the interval 33–155 (AMRRYDAASW…CVLALKSFSE (123 aa)). Residues 374 to 699 (NIRVYCRVRP…LKFAERVASV (326 aa)) form the Kinesin motor domain. An ATP-binding site is contributed by 457-464 (GQTGSGKT). A coiled-coil region spans residues 704–733 (AKANKEGSEVRELKEQIATLKAALAKKEGE). Basic and acidic residues predominate over residues 844–855 (YDPDKQRRRAEP). 2 disordered regions span residues 844-876 (YDPD…DQEM) and 912-954 (PNLA…NTPK). The span at 864 to 873 (FDAATSSPSD) shows a compositional bias: low complexity. Over residues 928-954 (PIRNSKQLPFSTTGGRRTRNGKINTPK) the composition is skewed to polar residues.

Belongs to the TRAFAC class myosin-kinesin ATPase superfamily. Kinesin family. KIN-14 subfamily. Forms oligomers in vitro. Interacts with actin microfilaments. Binds to actin in vitro through its calponin-homology (CH) domain. As to expression, expressed in primary leaf, primary root, developing flower and coleoptile.

It is found in the cytoplasm. The protein resides in the cytoskeleton. With respect to regulation, the microtubule-dependent ATPase activity is regulated by actin binding. Minus end-directed motor protein that transports actin filaments along microtubules. Plays a central role in the polar orientation of actin filaments along microtubules, and thus a contribution to the organization of the cytoskeletal architecture. Links the actin microfilaments with the cortical microtubules in both cycling and non-cycling cells. Required for efficient cell elongation by its participation in the premitotic nuclear positioning. In Oryza sativa subsp. japonica (Rice), this protein is Kinesin-like protein KIN-14Q.